The primary structure comprises 406 residues: Probable tRNA sulfurtransferase (406 aa).

One can recognise a THUMP domain in the interval Ala-62–Asp-167. Residues Met-185–Leu-186, His-210–Phe-211, Arg-267, Gly-289, and Gln-298 contribute to the ATP site.

This sequence belongs to the ThiI family.

Its subcellular location is the cytoplasm. It carries out the reaction [ThiI sulfur-carrier protein]-S-sulfanyl-L-cysteine + a uridine in tRNA + 2 reduced [2Fe-2S]-[ferredoxin] + ATP + H(+) = [ThiI sulfur-carrier protein]-L-cysteine + a 4-thiouridine in tRNA + 2 oxidized [2Fe-2S]-[ferredoxin] + AMP + diphosphate. It catalyses the reaction [ThiS sulfur-carrier protein]-C-terminal Gly-Gly-AMP + S-sulfanyl-L-cysteinyl-[cysteine desulfurase] + AH2 = [ThiS sulfur-carrier protein]-C-terminal-Gly-aminoethanethioate + L-cysteinyl-[cysteine desulfurase] + A + AMP + 2 H(+). It participates in cofactor biosynthesis; thiamine diphosphate biosynthesis. Functionally, catalyzes the ATP-dependent transfer of a sulfur to tRNA to produce 4-thiouridine in position 8 of tRNAs, which functions as a near-UV photosensor. Also catalyzes the transfer of sulfur to the sulfur carrier protein ThiS, forming ThiS-thiocarboxylate. This is a step in the synthesis of thiazole, in the thiamine biosynthesis pathway. The sulfur is donated as persulfide by IscS. The polypeptide is Probable tRNA sulfurtransferase (Lactococcus lactis subsp. cremoris (strain MG1363)).